The following is a 186-amino-acid chain: Interferon beta (186 aa).

Residues 1 to 21 (MTGRCILQIALLVCFFTTAHS) form the signal peptide. At Y24 the chain carries Phosphotyrosine. 4 N-linked (GlcNAc...) asparagine glycosylation sites follow: N46, N101, N131, and N136. A disulfide bridge connects residues C52 and C161.

Belongs to the alpha/beta interferon family. In terms of assembly, monomer.

The protein resides in the secreted. Type I interferon cytokine that plays a key role in the innate immune response to infection, developing tumors and other inflammatory stimuli. Signals via binding to high-affinity (IFNAR2) and low-affinity (IFNAR1) heterodimeric receptor, activating the canonical Jak-STAT signaling pathway resulting in transcriptional activation or repression of interferon-regulated genes that encode the effectors of the interferon response, such as antiviral proteins, regulators of cell proliferation and differentiation, and immunoregulatory proteins. Signals mostly via binding to a IFNAR1-IFNAR2 heterodimeric receptor, but can also function with IFNAR1 alone and independently of Jak-STAT pathways. Elicits a wide variety of responses, including antiviral and antibacterial activities, and can regulate the development of B-cells, myelopoiesis and lipopolysaccharide (LPS)-inducible production of tumor necrosis factor. Plays a role in neuronal homeostasis by regulating dopamine turnover and protecting dopaminergic neurons: acts by promoting neuronal autophagy and alpha-synuclein clearance, thereby preventing dopaminergic neuron loss. IFNB1 is more potent than interferon-alpha (IFN-alpha) in inducing the apoptotic and antiproliferative pathways required for control of tumor cell growth. This Felis catus (Cat) protein is Interferon beta (IFNB1).